An 856-amino-acid chain; its full sequence is Lon protease homolog 2, peroxisomal (856 aa).

A Lon N-terminal domain is found at 13 to 222 (LPLLLTHEGV…VTIPLLLRQI (210 aa)). Residue 379 to 386 (GPPGVGKT) participates in ATP binding. The segment covering 586–608 (GQHREHKSEHLEAPEGEERKESV) has biased composition (basic and acidic residues). The tract at residues 586–614 (GQHREHKSEHLEAPEGEERKESVPEGSKS) is disordered. Residues 655–841 (LNQPGVAIGL…DEVLNAAFDG (187 aa)) enclose the Lon proteolytic domain. Active-site residues include Ser747 and Lys790. The short motif at 854–856 (SKL) is the Microbody targeting signal element.

It belongs to the peptidase S16 family.

It localises to the peroxisome matrix. It carries out the reaction Hydrolysis of proteins in presence of ATP.. In terms of biological role, ATP-dependent serine protease that mediates the selective degradation of misfolded and unassembled polypeptides in the peroxisomal matrix. Necessary for type 2 peroxisome targeting signal (PTS2)-containing protein processing and facilitates peroxisome matrix protein import. The sequence is that of Lon protease homolog 2, peroxisomal (lonp2) from Xenopus laevis (African clawed frog).